Reading from the N-terminus, the 146-residue chain is Large ribosomal subunit protein uL15 (146 aa).

Residues Met1–Pro56 are disordered. Gly residues-rich tracts occupy residues Gln21 to Gln35 and Ser42 to Gly52.

This sequence belongs to the universal ribosomal protein uL15 family. In terms of assembly, part of the 50S ribosomal subunit.

Its function is as follows. Binds to the 23S rRNA. This Carboxydothermus hydrogenoformans (strain ATCC BAA-161 / DSM 6008 / Z-2901) protein is Large ribosomal subunit protein uL15.